The sequence spans 627 residues: (-)-alpha-pinene synthase 2, chloroplastic (627 aa).

A chloroplast-targeting transit peptide spans 1 to 36; it reads MALVSVAPMASRSCLHKSLSSSAHELKTICRTIPTL. Residues Asp378, Asp382, and Asp530 each coordinate Mg(2+). The short motif at 378–382 is the DDXXD motif element; that stretch reads DDMYD.

It belongs to the terpene synthase family. Tpsd subfamily. It depends on Mg(2+) as a cofactor. Mn(2+) is required as a cofactor.

It localises to the plastid. The protein localises to the chloroplast. It carries out the reaction (2E)-geranyl diphosphate = (1S,5S)-alpha-pinene + diphosphate. It catalyses the reaction (2E)-geranyl diphosphate = (1S,5S)-beta-pinene + diphosphate. Its pathway is terpene metabolism; oleoresin biosynthesis. Involved in defensive oleoresin formation in conifers in response to insect attack or other injury. Involved in monoterpene (C10) olefins biosynthesis. A mixture of alpha- and beta-pinene (35:10) is produced by this enzyme. In Picea sitchensis (Sitka spruce), this protein is (-)-alpha-pinene synthase 2, chloroplastic.